The primary structure comprises 262 residues: MRILVCAKQVPDTNEVKIDPKTGTMIREGVPSILNPDDANALEAALVIKDENPGTEVIVMTMGPPQASEMLRECLAMGADEAYLLSDRAFGGADTWATSATLAAGIKKVKKVDLVLAGRQAIDGDTAQVGSQIAQRLKMPVVTYVEDIKIEDKKAIVHRQMEDGYEVIEVQLPCLLTCVKELNDPRYMSVGGIMDAYEQPITIWNHEDIGLSPEACGLNASPTQVFRSFSPPAKGGGEMITGTTVNEVAGSLVSKLKEKHII.

This sequence belongs to the ETF beta-subunit/FixA family. As to quaternary structure, part of the homotrimeric caffeyl-CoA reductase-Etf complex composed of (R)-2-hydroxyisocaproyl-CoA dehydratase CarC, and the electron transfer flavoprotein (ETF) alpha (CarE) and beta (CarD) subunits. Requires FAD as cofactor. The cofactor is AMP.

It localises to the cytoplasm. It catalyses the reaction hydrocaffeoyl-CoA + 2 reduced [2Fe-2S]-[ferredoxin] + 2 NAD(+) = (E)-caffeoyl-CoA + 2 oxidized [2Fe-2S]-[ferredoxin] + 2 NADH. Its function is as follows. Caffeyl-CoA reductase-Etf complex catalyzes the reduction of caffeyl-CoA to yield hydrocaffeyl-CoA. It couples the endergonic ferredoxin reduction with NADH as reductant to the exergonic reduction of caffeoyl-CoA with the same reductant. It uses the mechanism of electron bifurcation to overcome the steep energy barrier in ferredoxin reduction. The electron transfer flavoprotein (Etf) mediates the electron transfer between the different donors and acceptors. The complex can also reduce 4-coumaroyl-CoA and feruloyl-CoA. The chain is Caffeyl-CoA reductase-Etf complex subunit CarD from Acetobacterium woodii (strain ATCC 29683 / DSM 1030 / JCM 2381 / KCTC 1655 / WB1).